A 348-amino-acid polypeptide reads, in one-letter code: tRNA pseudouridine synthase D (348 aa).

Residue phenylalanine 26 coordinates substrate. Residue aspartate 79 is the Nucleophile of the active site. Asparagine 128 serves as a coordination point for substrate. The TRUD domain maps to 154–302; sequence GVPNYFGSQR…VDPARRALLL (149 aa). A substrate-binding site is contributed by phenylalanine 328.

Belongs to the pseudouridine synthase TruD family.

It carries out the reaction uridine(13) in tRNA = pseudouridine(13) in tRNA. Its function is as follows. Responsible for synthesis of pseudouridine from uracil-13 in transfer RNAs. The protein is tRNA pseudouridine synthase D of Serratia proteamaculans (strain 568).